We begin with the raw amino-acid sequence, 59 residues long: Small ribosomal subunit protein bS21 (59 aa).

A disordered region spans residues 40 to 59; sequence KPSVKRKKKSEAARKRKSFR. Over residues 43-59 the composition is skewed to basic residues; that stretch reads VKRKKKSEAARKRKSFR.

This sequence belongs to the bacterial ribosomal protein bS21 family.

The polypeptide is Small ribosomal subunit protein bS21 (Desulforamulus reducens (strain ATCC BAA-1160 / DSM 100696 / MI-1) (Desulfotomaculum reducens)).